Here is a 905-residue protein sequence, read N- to C-terminus: Coatomer subunit beta' (905 aa).

WD repeat units lie at residues 13–52 (AMSDRVKSVDLHPTEPWMLASLYNGSVCVWNHETQTLVKT), 55–94 (VCDLPVRAAKFVARKNWVVTGADDMQIRVFNYNTLERVHM), 97–136 (AHSDYIRCIAVHPTQPFILTSSDDMLIKLWDWDKKWSCSQ), 140–180 (GHTH…PNFT), 183–224 (GHEK…CVQT), 227–266 (GHAQNVSCATFHPELPIIITGSEDGTVRIWHSSTYRLEST), 350–388 (SCEIYPQTIQHNPNGRFVVVCGDGEYIIYTAMALRNKSF), and 390–425 (SAQEFAWAHDSSEYAIRESNSVVKIFKNFKEKKSFK). N6-acetyllysine is present on Lys-627. One copy of the WD 9 repeat lies at 746-783 (IRTGRLPEAAFLARTYLPSQVSRVVKLWRENLSKVNQK). The interval 837–905 (EEAKRFQPSR…INLDEDILDD (69 aa)) is disordered. Ser-859 is subject to Phosphoserine. The stretch at 867 to 891 (QTTHKEEKSFQELEDDLDTMELEDI) forms a coiled coil. Acidic residues predominate over residues 878 to 905 (ELEDDLDTMELEDIDTTDINLDEDILDD).

Belongs to the WD repeat COPB2 family. As to quaternary structure, oligomeric complex that consists of at least the alpha, beta, beta', gamma, delta, epsilon and zeta subunits. Probably interacts with PEX11A. Interacts with JAGN1. Interacts with SCYL1.

It localises to the cytoplasm. Its subcellular location is the cytosol. It is found in the golgi apparatus membrane. The protein localises to the cytoplasmic vesicle. The protein resides in the COPI-coated vesicle membrane. In terms of biological role, the coatomer is a cytosolic protein complex that binds to dilysine motifs and reversibly associates with Golgi non-clathrin-coated vesicles, which further mediate biosynthetic protein transport from the ER, via the Golgi up to the trans Golgi network. Coatomer complex is required for budding from Golgi membranes, and is essential for the retrograde Golgi-to-ER transport of dilysine-tagged proteins. In mammals, the coatomer can only be recruited by membranes associated to ADP-ribosylation factors (ARFs), which are small GTP-binding proteins; the complex also influences the Golgi structural integrity, as well as the processing, activity, and endocytic recycling of LDL receptors. This coatomer complex protein, essential for Golgi budding and vesicular trafficking, is a selective binding protein (RACK) for protein kinase C, epsilon type. It binds to Golgi membranes in a GTP-dependent manner. The sequence is that of Coatomer subunit beta' (Copb2) from Rattus norvegicus (Rat).